Here is a 271-residue protein sequence, read N- to C-terminus: Cobalt import ATP-binding protein CbiO (271 aa).

The ABC transporter domain maps to 2 to 236 (LATSDLWFRY…TEAMEHAGLT (235 aa)). 34-41 (GANGCGKS) serves as a coordination point for ATP.

It belongs to the ABC transporter superfamily. Cobalt importer (TC 3.A.1.18.1) family. Forms an energy-coupling factor (ECF) transporter complex composed of an ATP-binding protein (A component, CbiO), a transmembrane protein (T component, CbiQ) and 2 possible substrate-capture proteins (S components, CbiM and CbiN) of unknown stoichimetry.

The protein resides in the cell inner membrane. It functions in the pathway cofactor biosynthesis; adenosylcobalamin biosynthesis. In terms of biological role, part of the energy-coupling factor (ECF) transporter complex CbiMNOQ involved in cobalt import. Presumably responsible for energy coupling to the transport system. This chain is Cobalt import ATP-binding protein CbiO, found in Salmonella typhi.